The chain runs to 186 residues: UPF0301 protein Saro_0683 (186 aa).

Belongs to the UPF0301 (AlgH) family.

The protein is UPF0301 protein Saro_0683 of Novosphingobium aromaticivorans (strain ATCC 700278 / DSM 12444 / CCUG 56034 / CIP 105152 / NBRC 16084 / F199).